The following is a 326-amino-acid chain: Protein LEG1 homolog (326 aa).

The first 22 residues, 1-22 (MKSNKTIFLILLFLINFNSIYS), serve as a signal peptide directing secretion. Residues asparagine 58, asparagine 85, asparagine 165, asparagine 226, and asparagine 245 are each glycosylated (N-linked (GlcNAc...) asparagine).

It belongs to the LEG1 family.

Its subcellular location is the secreted. The sequence is that of Protein LEG1 homolog from Dictyostelium discoideum (Social amoeba).